Here is an 86-residue protein sequence, read N- to C-terminus: MKNLIAELLLKLAQKEEESKELCAQVEALEIIVTAMLRNMAQNDQQRLIEQVEGALYEVKPDASIPDDDTELLRNYVKKLLKHPRQ.

Residues 1–36 (MKNLIAELLLKLAQKEEESKELCAQVEALEIIVTAM) are a coiled coil.

This sequence belongs to the IraP family. As to quaternary structure, interacts with RssB.

It localises to the cytoplasm. In terms of biological role, inhibits RpoS proteolysis by regulating RssB activity, thereby increasing the stability of the sigma stress factor RpoS especially during phosphate starvation, but also in stationary phase and during nitrogen starvation. Its effect on RpoS stability is due to its interaction with RssB, which probably blocks the interaction of RssB with RpoS, and the consequent delivery of the RssB-RpoS complex to the ClpXP protein degradation pathway. This is Anti-adapter protein IraP from Shigella boydii serotype 4 (strain Sb227).